A 337-amino-acid chain; its full sequence is Probable cytosolic iron-sulfur protein assembly protein Ciao1 (337 aa).

WD repeat units lie at residues 12 to 51, 58 to 97, 102 to 141, 147 to 186, 193 to 232, 251 to 290, and 301 to 337; these read GHRG…RWVA, GHSR…FECN, GHEN…EYEC, THTQ…SDWS, SHES…NEFG, YHSR…SPHE, and AHSQ…EPEE.

Belongs to the WD repeat CIA1 family.

Its function is as follows. Essential component of the cytosolic iron-sulfur (Fe/S) protein assembly machinery. Required for the maturation of extramitochondrial Fe/S proteins. This is Probable cytosolic iron-sulfur protein assembly protein Ciao1 from Aedes aegypti (Yellowfever mosquito).